We begin with the raw amino-acid sequence, 269 residues long: MKSFCKLEYDQVFGKENNSFSFLNHSSLYSHQSELANPFFELEDEMLPSATSSNCFTSASSFLALPDLEPISIVSHEADILSVYGSASWTAEETMFVSDFAKKSETTTTKKRRCREECFSSCSVSKTLSKETISLYFYMPITQAARELNIGLTLLKKRCRELGIKRWPHRKLMSLQKLISNVKELEKMEGEENEDKLRNALEKLEKEKKTIEKLPDLKFEDKTKRLRQACFKANHKRKRRSGMSTPITSSSSSASASSSSYSSVSGFER.

The RWP-RK domain maps to 106-195; that stretch reads TTTTKKRRCR…EKMEGEENED (90 aa). A coiled-coil region spans residues 175–216; it reads LQKLISNVKELEKMEGEENEDKLRNALEKLEKEKKTIEKLPD. The disordered stretch occupies residues 230 to 269; it reads CFKANHKRKRRSGMSTPITSSSSSASASSSSYSSVSGFER. Residues 249-269 show a composition bias toward low complexity; the sequence is SSSSSASASSSSYSSVSGFER.

It localises to the nucleus. Functionally, putative transcription factor. In Arabidopsis thaliana (Mouse-ear cress), this protein is Protein RKD1 (RKD1).